The chain runs to 227 residues: ATP synthase F(0) complex subunit a (227 aa).

6 helical membrane-spanning segments follow: residues 14–34 (YLGIPLIAIAIALPWVLFPLP), 69–89 (WALLLASLMVFLITINMLGLL), 98–118 (QLSLNMGLAIPLWLATVIIGL), 132–152 (EGTPLPLIPVLIIIETISLFI), 179–199 (VFVLLPMMPTVAILTATVLFL), and 202–222 (LLEVAVAMIQAYVFVLLLSLY).

The protein belongs to the ATPase A chain family. As to quaternary structure, component of the ATP synthase complex composed at least of ATP5F1A/subunit alpha, ATP5F1B/subunit beta, ATP5MC1/subunit c (homooctomer), MT-ATP6/subunit a, MT-ATP8/subunit 8, ATP5ME/subunit e, ATP5MF/subunit f, ATP5MG/subunit g, ATP5MK/subunit k, ATP5MJ/subunit j, ATP5F1C/subunit gamma, ATP5F1D/subunit delta, ATP5F1E/subunit epsilon, ATP5PF/subunit F6, ATP5PB/subunit b, ATP5PD/subunit d, ATP5PO/subunit OSCP. ATP synthase complex consists of a soluble F(1) head domain (subunits alpha(3) and beta(3)) - the catalytic core - and a membrane F(0) domain - the membrane proton channel (subunits c, a, 8, e, f, g, k and j). These two domains are linked by a central stalk (subunits gamma, delta, and epsilon) rotating inside the F1 region and a stationary peripheral stalk (subunits F6, b, d, and OSCP). Interacts with DNAJC30; interaction is direct.

Its subcellular location is the mitochondrion inner membrane. It carries out the reaction H(+)(in) = H(+)(out). Subunit a, of the mitochondrial membrane ATP synthase complex (F(1)F(0) ATP synthase or Complex V) that produces ATP from ADP in the presence of a proton gradient across the membrane which is generated by electron transport complexes of the respiratory chain. ATP synthase complex consist of a soluble F(1) head domain - the catalytic core - and a membrane F(1) domain - the membrane proton channel. These two domains are linked by a central stalk rotating inside the F(1) region and a stationary peripheral stalk. During catalysis, ATP synthesis in the catalytic domain of F(1) is coupled via a rotary mechanism of the central stalk subunits to proton translocation. With the subunit c (ATP5MC1), forms the proton-conducting channel in the F(0) domain, that contains two crucial half-channels (inlet and outlet) that facilitate proton movement from the mitochondrial intermembrane space (IMS) into the matrix. Protons are taken up via the inlet half-channel and released through the outlet half-channel, following a Grotthuss mechanism. This is ATP synthase F(0) complex subunit a from Formosania lacustris (Oriental stream loach).